The primary structure comprises 138 residues: Large ribosomal subunit protein uL16 (138 aa).

The span at 1–16 (MLIPRRVKHRKQHHPS) shows a compositional bias: basic residues. Residues 1–25 (MLIPRRVKHRKQHHPSRSGAAKGGT) form a disordered region.

The protein belongs to the universal ribosomal protein uL16 family. In terms of assembly, part of the 50S ribosomal subunit.

In terms of biological role, binds 23S rRNA and is also seen to make contacts with the A and possibly P site tRNAs. In Rhodococcus erythropolis (strain PR4 / NBRC 100887), this protein is Large ribosomal subunit protein uL16.